The following is a 66-amino-acid chain: Surface composition regulator (66 aa).

The protein belongs to the GlgS family.

Functionally, major determinant of cell surface composition. Negatively regulates motility, adhesion and synthesis of biofilm exopolysaccharides. This Escherichia coli O127:H6 (strain E2348/69 / EPEC) protein is Surface composition regulator.